We begin with the raw amino-acid sequence, 152 residues long: Sec-independent protein translocase protein TatB (152 aa).

The helical transmembrane segment at 1–21 (MFDLGWSELLVIGVVALIVVG) threads the bilayer.

Belongs to the TatB family. The Tat system comprises two distinct complexes: a TatABC complex, containing multiple copies of TatA, TatB and TatC subunits, and a separate TatA complex, containing only TatA subunits. Substrates initially bind to the TatABC complex, which probably triggers association of the separate TatA complex to form the active translocon.

It is found in the cell inner membrane. Functionally, part of the twin-arginine translocation (Tat) system that transports large folded proteins containing a characteristic twin-arginine motif in their signal peptide across membranes. Together with TatC, TatB is part of a receptor directly interacting with Tat signal peptides. TatB may form an oligomeric binding site that transiently accommodates folded Tat precursor proteins before their translocation. The chain is Sec-independent protein translocase protein TatB from Ruegeria pomeroyi (strain ATCC 700808 / DSM 15171 / DSS-3) (Silicibacter pomeroyi).